The primary structure comprises 601 residues: NAD(+)--arginine ADP-ribosyltransferase Chelt (601 aa).

The signal sequence occupies residues 1–18 (MKTIISLIFIMFPLFVSA). NAD(+) is bound by residues 26-43 (ADSR…LYPR) and Glu-130. The active site involves Glu-130. A disulfide bridge connects residues Cys-205 and Cys-220.

This sequence belongs to the enterotoxin A family.

The protein resides in the secreted. It carries out the reaction L-arginyl-[protein] + NAD(+) = N(omega)-(ADP-D-ribosyl)-L-arginyl-[protein] + nicotinamide + H(+). Its function is as follows. A probable mono(ADP-ribosyl)transferase, it may ADP-ribosylate Arg in target protein(s). Upon expression in yeast cells causes cell death. This Vibrio cholerae protein is NAD(+)--arginine ADP-ribosyltransferase Chelt.